Reading from the N-terminus, the 296-residue chain is N-acetylmuramic acid 6-phosphate etherase (296 aa).

One can recognise an SIS domain in the interval 54 to 217 (VTESFRKGGR…STTSMVGIGK (164 aa)). The active-site Proton donor is glutamate 82. The active site involves glutamate 113.

The protein belongs to the GCKR-like family. MurNAc-6-P etherase subfamily. In terms of assembly, homodimer.

The enzyme catalyses N-acetyl-D-muramate 6-phosphate + H2O = N-acetyl-D-glucosamine 6-phosphate + (R)-lactate. It participates in amino-sugar metabolism; N-acetylmuramate degradation. Specifically catalyzes the cleavage of the D-lactyl ether substituent of MurNAc 6-phosphate, producing GlcNAc 6-phosphate and D-lactate. The protein is N-acetylmuramic acid 6-phosphate etherase of Listeria welshimeri serovar 6b (strain ATCC 35897 / DSM 20650 / CCUG 15529 / CIP 8149 / NCTC 11857 / SLCC 5334 / V8).